A 63-amino-acid chain; its full sequence is Beta-defensin 38 (63 aa).

A signal peptide spans 1-21 (MKISCFLLLILSLYFFQINQA). Disulfide bonds link Cys-29–Cys-58, Cys-36–Cys-51, and Cys-41–Cys-59.

Belongs to the beta-defensin family. Only expressed in epididymis (caput, corpus and cauda).

The protein resides in the secreted. Synthetic Defb38 kills both Gram-negative (E.coli and P.aeruginosa) and Gram-positive (E.faecium) bacteria. This is Beta-defensin 38 (Defb38) from Mus musculus (Mouse).